Here is a 495-residue protein sequence, read N- to C-terminus: GTPase Der (495 aa).

EngA-type G domains lie at 3 to 166 (PVIA…MDAE) and 208 to 381 (IKLA…DCST). GTP-binding positions include 9–16 (GRPNVGKS), 56–60 (DTGGI), 118–121 (NKTD), 214–221 (GRPNVGKS), 261–265 (DTAGV), and 326–329 (NKWD). Positions 382-466 (KRVGTSLLTR…PIRIQFKEGE (85 aa)) constitute a KH-like domain.

Belongs to the TRAFAC class TrmE-Era-EngA-EngB-Septin-like GTPase superfamily. EngA (Der) GTPase family. As to quaternary structure, associates with the 50S ribosomal subunit.

Functionally, GTPase that plays an essential role in the late steps of ribosome biogenesis. This chain is GTPase Der, found in Yersinia pseudotuberculosis serotype IB (strain PB1/+).